We begin with the raw amino-acid sequence, 1961 residues long: Ankyrin-3 (1961 aa).

Residues 1–10 are compositionally biased toward basic and acidic residues; it reads MSEEPKEKPA. Positions 1–25 are disordered; sequence MSEEPKEKPAKPAHRKRKGKKSDAN. Positions 11–20 are enriched in basic residues; it reads KPAHRKRKGK. The residue at position 22 (serine 22) is a Phosphoserine. 23 ANK repeats span residues 56–85, 89–118, 122–151, 155–184, 186–213, 217–246, 250–279, 283–312, 316–345, 349–378, 382–411, 415–444, 448–477, 481–510, 514–543, 547–576, 580–609, 613–642, 646–675, 679–708, 712–741, 745–774, and 778–807; these read NGLN…NVDA, KGNT…NVNA, NGFT…SQSL, DGFT…KGKV, LPAL…NADV, SGFT…AVDF, NDIT…KIDA, DGLT…PILS, NGLS…PVDD, DYLT…SPNA, NGFT…SIQA, SGLT…SPNT, RGET…QVEA, DDQT…SPNA, SGYT…SLSI, KGFT…SPDA, SGLT…SPHA, NGYT…DANA, QGIA…NVNL, SGLT…HVDA, MGYT…KVNA, NGYT…SPNE, and NGNT…EIMT. Serine 606 is modified (phosphoserine). Residue leucine 732 is modified to Phosphoserine. Phosphoserine occurs at positions 830, 844, 850, 873, 914, 917, 923, 958, 960, and 1114. ZU5 domains are found at residues 985 to 1140 and 1142 to 1289; these read FLVS…VVSR and KQES…LADC. The tract at residues 1274-1408 is UPA domain; the sequence is VSFTTNVSAR…SIKIRDTSQE (135 aa). Residues serine 1451, serine 1462, serine 1470, serine 1473, and glycine 1560 each carry the phosphoserine modification. The Death domain maps to 1478 to 1562; the sequence is TDIRMAIVAD…DIVTLLEGPI (85 aa). 5 disordered regions span residues 1606–1678, 1698–1740, 1784–1818, 1844–1884, and 1915–1961; these read PNPF…DPLD, SVPG…VTED, WQNE…DQAR, PEAK…PVSP, and MTRT…KKTH. Basic and acidic residues predominate over residues 1725–1740; the sequence is QQEKGKSGPDEEVTED. The segment covering 1784–1795 has biased composition (polar residues); sequence WQNETPSGSLES. A phosphoserine mark is found at serine 1795, serine 1813, and serine 1883. A compositionally biased stretch (basic and acidic residues) spans 1808–1818; that stretch reads DRLDDSSDQAR. Basic and acidic residues predominate over residues 1933 to 1961; that stretch reads GSTRSEPKQGEGYKVKTKKEIRNVEKKTH.

May be a constituent of a NFASC/NRCAM/ankyrin G complex. Interacts with RHBG. Directly interacts with DMD and betaDAG1; this interaction does not interfere with DMD-binding and is required for DMD and betaDAG1 retention at costameres. Interacts (via N-terminal ANK repeats) with SCHIP1 isoform 7 (via C-terminus); this interaction is required for the localization at axon initial segments (AISs) and nodes of Ranvier (NRs). Interacts with PLEC and FLNC. Interacts with KCNA1; this inhibits channel activity. Interacts with SCN5A. Interacts with PKP2 and GJA1/CX43. As to expression, expressed in many epithelial tissues, muscles and axons. Expressed in kidney, brain, skin, lung, liver, intestine, pancreas, heart and testis (at protein level). In testis, expressed in Leydig cells, but very weakly or not at all in Sertoli cells or seminiferous tubules. Expressed in macrophages (at protein level).

Its subcellular location is the cytoplasm. The protein resides in the cytoskeleton. It localises to the cell projection. The protein localises to the axon. It is found in the cell membrane. Its subcellular location is the sarcolemma. The protein resides in the postsynaptic cell membrane. It localises to the lysosome. The protein localises to the T-tubule. In terms of biological role, membrane-cytoskeleton linker. May participate in the maintenance/targeting of ion channels and cell adhesion molecules at the nodes of Ranvier and axonal initial segments. In skeletal muscle, required for costamere localization of DMD and betaDAG1. Regulates KCNA1 channel activity in function of dietary Mg(2+) levels, and thereby contributes to the regulation of renal Mg(2+) reabsorption. Required for intracellular adhesion and junctional conductance in myocytes, potentially via stabilization of GJA1/CX43 protein abundance and promotion of PKP2, GJA1/CX43, and SCN5A/Nav1.5 localization to cell-cell junctions. The sequence is that of Ankyrin-3 (Ank3) from Mus musculus (Mouse).